The primary structure comprises 170 residues: tRNA-splicing endonuclease (170 aa).

Residues Y110, H116, and K147 contribute to the active site.

It belongs to the tRNA-intron endonuclease family. Archaeal short subfamily. As to quaternary structure, homotetramer; although the tetramer contains four active sites, only two participate in the cleavage. Therefore, it should be considered as a dimer of dimers.

The catalysed reaction is pretRNA = a 3'-half-tRNA molecule with a 5'-OH end + a 5'-half-tRNA molecule with a 2',3'-cyclic phosphate end + an intron with a 2',3'-cyclic phosphate and a 5'-hydroxyl terminus.. Functionally, endonuclease that removes tRNA introns. Cleaves pre-tRNA at the 5'- and 3'-splice sites to release the intron. The products are an intron and two tRNA half-molecules bearing 2',3' cyclic phosphate and 5'-OH termini. Recognizes a pseudosymmetric substrate in which 2 bulged loops of 3 bases are separated by a stem of 4 bp. This chain is tRNA-splicing endonuclease, found in Pyrococcus abyssi (strain GE5 / Orsay).